The primary structure comprises 162 residues: V-type proton ATPase subunit c' (162 aa).

Residues 1–11 (MSSNLCPIYSS) are Lumenal-facing. A helical membrane pass occupies residues 12–32 (FFGFAGVCASMVFSCLGAGYG). Residues 33-54 (TALAGRGIAAVGAFRPEIVMKS) are Cytoplasmic-facing. A helical transmembrane segment spans residues 55 to 75 (LIPVVMSGIIGVYGLVMSVLI). Residues 76-93 (AGDMSPDNDYSLFSGFIH) are Lumenal-facing. Residues 94–114 (LSAGLAVGLTGVAAGYAIGVV) form a helical membrane-spanning segment. The Cytoplasmic portion of the chain corresponds to 115 to 132 (GDRGVQSFMRQDRIFVSM). Residues 133-153 (VLILIFAEVLGLYGLIVGLIL) traverse the membrane as a helical segment. Topologically, residues 154–162 (QTKTSNVCY) are lumenal.

It belongs to the V-ATPase proteolipid subunit family. As to quaternary structure, V-ATPase is a heteromultimeric enzyme composed of a peripheral catalytic V1 complex (components A to H) attached to an integral membrane V0 proton pore complex (components: a, c, c', c'', d, e, f and VOA1). The decameric c-ring forms the proton-conducting pore, and is composed of eight proteolipid subunits c, one subunit c' and one subunit c''.

Its subcellular location is the vacuole membrane. Functionally, proton-conducting pore forming subunit of the V0 complex of vacuolar(H+)-ATPase (V-ATPase), a multisubunit enzyme composed of a peripheral complex (V1) that hydrolyzes ATP and a membrane integral complex (V0) that translocates protons. V-ATPase is responsible for acidifying and maintaining the pH of intracellular compartments. This is V-type proton ATPase subunit c' from Schizosaccharomyces pombe (strain 972 / ATCC 24843) (Fission yeast).